The following is a 320-amino-acid chain: Cytochrome f (320 aa).

An N-terminal signal peptide occupies residues methionine 1–alanine 35. Positions 36, 56, 59, and 60 each coordinate heme. A helical membrane pass occupies residues valine 286–lysine 306.

The protein belongs to the cytochrome f family. The 4 large subunits of the cytochrome b6-f complex are cytochrome b6, subunit IV (17 kDa polypeptide, petD), cytochrome f and the Rieske protein, while the 4 small subunits are PetG, PetL, PetM and PetN. The complex functions as a dimer. Requires heme as cofactor.

The protein localises to the plastid. Its subcellular location is the chloroplast thylakoid membrane. Functionally, component of the cytochrome b6-f complex, which mediates electron transfer between photosystem II (PSII) and photosystem I (PSI), cyclic electron flow around PSI, and state transitions. In Olimarabidopsis pumila (Dwarf rocket), this protein is Cytochrome f.